Reading from the N-terminus, the 145-residue chain is Lipoprotein signal peptidase (145 aa).

The next 3 helical transmembrane spans lie at 1–21 (MVYI…LLVM), 57–77 (YLFI…YYKT), and 79–99 (GSGM…GNLI). Catalysis depends on residues Asp109 and Asp123. Residues 115 to 135 (IWPVFNLADSSVVIGAALLIL) traverse the membrane as a helical segment.

The protein belongs to the peptidase A8 family.

The protein resides in the cell inner membrane. It catalyses the reaction Release of signal peptides from bacterial membrane prolipoproteins. Hydrolyzes -Xaa-Yaa-Zaa-|-(S,diacylglyceryl)Cys-, in which Xaa is hydrophobic (preferably Leu), and Yaa (Ala or Ser) and Zaa (Gly or Ala) have small, neutral side chains.. It participates in protein modification; lipoprotein biosynthesis (signal peptide cleavage). Its function is as follows. This protein specifically catalyzes the removal of signal peptides from prolipoproteins. This Halothermothrix orenii (strain H 168 / OCM 544 / DSM 9562) protein is Lipoprotein signal peptidase.